We begin with the raw amino-acid sequence, 132 residues long: Replication enhancer protein (132 aa).

It belongs to the geminiviridae replication enhancer protein family. As to quaternary structure, homooligomer. Interacts with the replication-associated protein (REP). Interacts with host proliferating cell nuclear antigen (PCNA). Interacts with host retinoblastoma-related protein 1 (RBR1), and may thereby deregulate the host cell cycle. Oligomerization and interaction with PCNA are necessary for optimal replication enhancement.

Increases viral DNA accumulation. Enhances infectivity and symptom expression. This Macroptilium lathyroides (Lima bean) protein is Replication enhancer protein.